A 702-amino-acid polypeptide reads, in one-letter code: Autophagy-related protein 9 (702 aa).

The Cytoplasmic segment spans residues 1 to 205 (MFYQPAQNKK…GKGLSCIIVH (205 aa)). Positions 35–128 (QESLDSDEDE…SKQKPALPNF (94 aa)) are disordered. The span at 38–47 (LDSDEDESSP) shows a compositional bias: acidic residues. Residues 94 to 107 (SSKVPSKHPSPSFP) are compositionally biased toward low complexity. Positions 108–120 (ETTSLRNLQNGSK) are enriched in polar residues. Residues 206–223 (RLFQILTVSFVIGFTTFI) traverse the membrane as a helical segment. Topologically, residues 224 to 251 (TSCIDWPAVTPHGSLAGVTKSQCIAQMS) are lumenal. Residues 252–270 (PITYLVLWLFLSFLLALWI) form a helical membrane-spanning segment. At 271–421 (YYLTDIPRLW…RRRFIVAGFL (151 aa)) the chain is on the cytoplasmic side. Residues 422–446 (NCLFAPIVAIYLVIHNFFRYFNEYH) lie within the membrane without spanning it. Residues 447–496 (KNPGALSTRRYTPLALWTFREYNELQHFFDERINDSYAAASHYVSQFPDF) lie on the Cytoplasmic side of the membrane. Residues 497–522 (NMIRLFKYISFILGSFTAILVIITVF) traverse the membrane as a helical segment. The Lumenal portion of the chain corresponds to 523–537 (DPELMVTFEITKDRS). The helical transmembrane segment at 538-555 (VLFYLGLFGSLIAVSRSI) threads the bilayer. Over 556-603 (IPDETLVFAPEKALRRVITFTHYMPGWWSDNMHSKAVQQEFCSLYSYR) the chain is Cytoplasmic. The stretch at 604–624 (IVNLLWEILGILLTPVLLFFT) is an intramembrane region. The Cytoplasmic segment spans residues 625–702 (FPSCSQDIVD…NTEAPRRDLR (78 aa)).

This sequence belongs to the ATG9 family. Homotrimer; forms a homotrimer with a central pore that forms a path between the two membrane leaflets. Interacts with ctl1. Phosphorylated by atg1. Atg1 phosphorylation is required for preautophagosome elongation.

The protein resides in the preautophagosomal structure membrane. Its subcellular location is the cytoplasmic vesicle membrane. It localises to the golgi apparatus membrane. The protein localises to the endoplasmic reticulum membrane. The catalysed reaction is a 1,2-diacyl-sn-glycero-3-phosphocholine(in) = a 1,2-diacyl-sn-glycero-3-phosphocholine(out). The enzyme catalyses a 1,2-diacyl-sn-glycero-3-phospho-L-serine(in) = a 1,2-diacyl-sn-glycero-3-phospho-L-serine(out). It catalyses the reaction a 1,2-diacyl-sn-glycero-3-phosphoethanolamine(in) = a 1,2-diacyl-sn-glycero-3-phosphoethanolamine(out). It carries out the reaction a 1,2-diacyl-sn-glycero-3-phospho-(1D-myo-inositol-3-phosphate)(in) = a 1,2-diacyl-sn-glycero-3-phospho-(1D-myo-inositol-3-phosphate)(out). Functionally, phospholipid scramblase involved in autophagy and cytoplasm to vacuole transport (Cvt) vesicle formation. Cycles between the preautophagosomal structure/phagophore assembly site (PAS) and the cytoplasmic vesicle pool and supplies membrane for the growing autophagosome. Lipid scramblase activity plays a key role in preautophagosomal structure/phagophore assembly by distributing the phospholipids that arrive through atg2 from the cytoplasmic to the luminal leaflet of the bilayer, thereby driving autophagosomal membrane expansion. Also involved in endoplasmic reticulum-specific autophagic process and is essential for the survival of cells subjected to severe ER stress. Different machineries are required for anterograde trafficking to the PAS during either the Cvt pathway or bulk autophagy and for retrograde trafficking. Has a role in meiosis and sporulation. The polypeptide is Autophagy-related protein 9 (Schizosaccharomyces pombe (strain 972 / ATCC 24843) (Fission yeast)).